The primary structure comprises 408 residues: D-inositol 3-phosphate glycosyltransferase (408 aa).

Position 7 (H7) interacts with 1D-myo-inositol 3-phosphate. UDP-N-acetyl-alpha-D-glucosamine contacts are provided by residues 13 to 14 and G21; that span reads QP. Residues 18-23, K76, Y109, T133, and R153 each bind 1D-myo-inositol 3-phosphate; that span reads DAGGMN. UDP-N-acetyl-alpha-D-glucosamine is bound by residues R227, K232, and V288. Mg(2+) contacts are provided by F297, R298, and A300. UDP-N-acetyl-alpha-D-glucosamine contacts are provided by E310 and E318. T324 provides a ligand contact to Mg(2+).

Belongs to the glycosyltransferase group 1 family. MshA subfamily. Homodimer.

It catalyses the reaction 1D-myo-inositol 3-phosphate + UDP-N-acetyl-alpha-D-glucosamine = 1D-myo-inositol 2-acetamido-2-deoxy-alpha-D-glucopyranoside 3-phosphate + UDP + H(+). Catalyzes the transfer of a N-acetyl-glucosamine moiety to 1D-myo-inositol 3-phosphate to produce 1D-myo-inositol 2-acetamido-2-deoxy-glucopyranoside 3-phosphate in the mycothiol biosynthesis pathway. The chain is D-inositol 3-phosphate glycosyltransferase from Paenarthrobacter aurescens (strain TC1).